Here is a 119-residue protein sequence, read N- to C-terminus: MARVKRGVVARRSHKKVLKAAKGYYGARSRVFRVAKQAVIKAGQYAYRDRRNKKRNFRALWITRINAQSRAEGMSYSRLIAGLKKAEITLDRRVLADLAIHDKPAFAAIVAKAKDALAA.

This sequence belongs to the bacterial ribosomal protein bL20 family.

Functionally, binds directly to 23S ribosomal RNA and is necessary for the in vitro assembly process of the 50S ribosomal subunit. It is not involved in the protein synthesizing functions of that subunit. In Teredinibacter turnerae (strain ATCC 39867 / T7901), this protein is Large ribosomal subunit protein bL20.